We begin with the raw amino-acid sequence, 521 residues long: Maturase K (521 aa).

The protein belongs to the intron maturase 2 family. MatK subfamily.

It is found in the plastid. It localises to the chloroplast. Usually encoded in the trnK tRNA gene intron. Probably assists in splicing its own and other chloroplast group II introns. The polypeptide is Maturase K (Anthericum liliago (St-Bernard's lily)).